Reading from the N-terminus, the 188-residue chain is Peptidyl-tRNA hydrolase (188 aa).

Tyrosine 14 provides a ligand contact to tRNA. Catalysis depends on histidine 19, which acts as the Proton acceptor. Residues tyrosine 64, asparagine 66, and asparagine 112 each contribute to the tRNA site.

This sequence belongs to the PTH family. In terms of assembly, monomer.

The protein resides in the cytoplasm. The catalysed reaction is an N-acyl-L-alpha-aminoacyl-tRNA + H2O = an N-acyl-L-amino acid + a tRNA + H(+). In terms of biological role, hydrolyzes ribosome-free peptidyl-tRNAs (with 1 or more amino acids incorporated), which drop off the ribosome during protein synthesis, or as a result of ribosome stalling. Its function is as follows. Catalyzes the release of premature peptidyl moieties from peptidyl-tRNA molecules trapped in stalled 50S ribosomal subunits, and thus maintains levels of free tRNAs and 50S ribosomes. This is Peptidyl-tRNA hydrolase from Clostridium novyi (strain NT).